We begin with the raw amino-acid sequence, 844 residues long: Beta-mannosidase B (844 aa).

The active-site Proton donor is E432. Residue N723 is glycosylated (N-linked (GlcNAc...) asparagine).

Belongs to the glycosyl hydrolase 2 family. Beta-mannosidase B subfamily.

It catalyses the reaction Hydrolysis of terminal, non-reducing beta-D-mannose residues in beta-D-mannosides.. The protein operates within glycan metabolism; N-glycan degradation. Functionally, exoglycosidase that cleaves the single beta-linked mannose residue from the non-reducing end of beta-mannosidic oligosaccharides of various complexity and length. Prefers mannobiose over mannotriose and has no activity against polymeric mannan. Is also severely restricted by galactosyl substitutions at the +1 subsite. This Aspergillus niger (strain ATCC MYA-4892 / CBS 513.88 / FGSC A1513) protein is Beta-mannosidase B (mndB).